The chain runs to 498 residues: Glycylpeptide N-tetradecanoyltransferase 2 (498 aa).

Positions 1-88 (MAEDSESAAS…QPSKNPSVPM (88 aa)) are disordered. Over residues 15–32 (ELDDQDTCGIDGDNEEET) the composition is skewed to acidic residues. S38 carries the phosphoserine modification. The segment covering 45 to 57 (AKKKKKKQKRKKE) has biased composition (basic residues). Residues 61 to 86 (SGGTKSDSASDSQEIKIQQPSKNPSV) are compositionally biased toward polar residues. The tetradecanoyl-CoA site is built by H117, W122, L250, V252, S258, R260, V261, and A262.

This sequence belongs to the NMT family.

It is found in the cytoplasm. Its subcellular location is the membrane. The catalysed reaction is N-terminal glycyl-[protein] + tetradecanoyl-CoA = N-tetradecanoylglycyl-[protein] + CoA + H(+). The enzyme catalyses N-terminal glycyl-L-lysyl-[protein] + tetradecanoyl-CoA = N-terminal glycyl-(N(6)-tetradecanoyl)-L-lysyl-[protein] + CoA + H(+). Adds a myristoyl group to the N-terminal glycine residue of certain cellular and viral proteins. Also able to mediate N-terminal lysine myristoylation of proteins: catalyzes myristoylation of ARF6 on both 'Gly-2' and 'Lys-3'. Lysine myristoylation is required to maintain ARF6 on membranes during the GTPase cycle. In Homo sapiens (Human), this protein is Glycylpeptide N-tetradecanoyltransferase 2.